Consider the following 399-residue polypeptide: Elongation factor Tu (399 aa).

The 200-residue stretch at 10–209 folds into the tr-type G domain; that stretch reads KPHVNIGTIG…AVDDYIPTPV (200 aa). The tract at residues 19 to 26 is G1; the sequence is GHVDHGKT. 19-26 lines the GTP pocket; the sequence is GHVDHGKT. Thr-26 contacts Mg(2+). The interval 62-66 is G2; that stretch reads GITIN. The tract at residues 83-86 is G3; sequence DCPG. Residues 83-87 and 138-141 each bind GTP; these read DCPGH and NKCD. The G4 stretch occupies residues 138 to 141; sequence NKCD. The tract at residues 175–177 is G5; sequence SAY.

This sequence belongs to the TRAFAC class translation factor GTPase superfamily. Classic translation factor GTPase family. EF-Tu/EF-1A subfamily. Monomer.

Its subcellular location is the cytoplasm. It carries out the reaction GTP + H2O = GDP + phosphate + H(+). GTP hydrolase that promotes the GTP-dependent binding of aminoacyl-tRNA to the A-site of ribosomes during protein biosynthesis. This Bifidobacterium longum (strain DJO10A) protein is Elongation factor Tu.